A 318-amino-acid polypeptide reads, in one-letter code: Bis(5'-nucleosyl)-tetraphosphatase, symmetrical (318 aa).

The tract at residues 269 to 318 (PGREVTGPAPVARAPRRPRERQGRQRSRGNRGNAGNAAAGPKPSVDTPQD) is disordered. A compositionally biased stretch (basic residues) spans 282–297 (APRRPRERQGRQRSRG). Over residues 298 to 311 (NRGNAGNAAAGPKP) the composition is skewed to low complexity.

The protein belongs to the Ap4A hydrolase family.

It carries out the reaction P(1),P(4)-bis(5'-adenosyl) tetraphosphate + H2O = 2 ADP + 2 H(+). In terms of biological role, hydrolyzes diadenosine 5',5'''-P1,P4-tetraphosphate to yield ADP. In Xanthomonas euvesicatoria pv. vesicatoria (strain 85-10) (Xanthomonas campestris pv. vesicatoria), this protein is Bis(5'-nucleosyl)-tetraphosphatase, symmetrical.